The chain runs to 406 residues: Imidazolonepropionase (406 aa).

His-74 and His-76 together coordinate Fe(3+). Positions 74 and 76 each coordinate Zn(2+). 4-imidazolone-5-propanoate contacts are provided by Arg-83, Tyr-146, and His-179. Tyr-146 is a binding site for N-formimidoyl-L-glutamate. His-240 contributes to the Fe(3+) binding site. A Zn(2+)-binding site is contributed by His-240. A 4-imidazolone-5-propanoate-binding site is contributed by Glu-243. Asp-314 lines the Fe(3+) pocket. Position 314 (Asp-314) interacts with Zn(2+). N-formimidoyl-L-glutamate-binding residues include Asn-316 and Gly-318. Ser-319 is a 4-imidazolone-5-propanoate binding site.

Belongs to the metallo-dependent hydrolases superfamily. HutI family. Zn(2+) serves as cofactor. Requires Fe(3+) as cofactor.

It is found in the cytoplasm. The catalysed reaction is 4-imidazolone-5-propanoate + H2O = N-formimidoyl-L-glutamate. It functions in the pathway amino-acid degradation; L-histidine degradation into L-glutamate; N-formimidoyl-L-glutamate from L-histidine: step 3/3. Catalyzes the hydrolytic cleavage of the carbon-nitrogen bond in imidazolone-5-propanoate to yield N-formimidoyl-L-glutamate. It is the third step in the universal histidine degradation pathway. In Kosmotoga olearia (strain ATCC BAA-1733 / DSM 21960 / TBF 19.5.1), this protein is Imidazolonepropionase.